Reading from the N-terminus, the 146-residue chain is Ribosome-binding factor A (146 aa).

Residues 113–146 (IRDEREAQEPAQDPAQDSSQDASVEASDAPDKAE) form a disordered region.

It belongs to the RbfA family. As to quaternary structure, monomer. Binds 30S ribosomal subunits, but not 50S ribosomal subunits or 70S ribosomes.

The protein resides in the cytoplasm. One of several proteins that assist in the late maturation steps of the functional core of the 30S ribosomal subunit. Associates with free 30S ribosomal subunits (but not with 30S subunits that are part of 70S ribosomes or polysomes). Required for efficient processing of 16S rRNA. May interact with the 5'-terminal helix region of 16S rRNA. The polypeptide is Ribosome-binding factor A (Gemmatimonas aurantiaca (strain DSM 14586 / JCM 11422 / NBRC 100505 / T-27)).